A 245-amino-acid polypeptide reads, in one-letter code: Dehydrogenase/reductase SDR family member 6 (245 aa).

Residues 16–18 (QGI), Asp-37, and Asp-58 each bind NAD(+). A substrate-binding site is contributed by Arg-144. The active-site Proton acceptor is the Tyr-147. NAD(+) is bound by residues Lys-151 and 180–184 (VDTPS). The substrate site is built by Arg-188 and Arg-205.

It belongs to the short-chain dehydrogenases/reductases (SDR) family. As to quaternary structure, homotetramer.

It localises to the cytoplasm. The catalysed reaction is cis-4-hydroxy-L-proline + NAD(+) = 4-oxo-L-proline + NADH + H(+). It carries out the reaction (R)-3-hydroxybutanoate + NAD(+) = acetoacetate + NADH + H(+). Its pathway is amino-acid metabolism. The protein operates within siderophore biosynthesis. Functionally, NAD(H)-dependent dehydrogenase/reductase with a preference for cyclic substrates. Catalyzes stereoselective conversion of 4-oxo-L-proline to cis-4-hydroxy-L-proline, likely a detoxification mechanism for ketoprolines. Mediates the formation of 2,5-dihydroxybenzoate (2,5-DHBA), a siderophore that chelates free cytoplasmic iron, thereby regulating iron transport and homeostasis while protecting cells against free radical-induced oxidative stress. The iron-siderophore complex is imported into mitochondria, providing an iron source for mitochondrial metabolic processes in particular heme synthesis. May act as a 3-hydroxybutyrate dehydrogenase. The sequence is that of Dehydrogenase/reductase SDR family member 6 (bdh2) from Danio rerio (Zebrafish).